A 535-amino-acid polypeptide reads, in one-letter code: Berberine bridge enzyme-like 27 (535 aa).

An N-terminal signal peptide occupies residues 1 to 22 (MEILRFLLSLFIYFLLLNLSLS). N-linked (GlcNAc...) asparagine glycans are attached at residues Asn-18 and Asn-66. An intrachain disulfide couples Cys-40 to Cys-100. Residues 78–253 (ETPKPVSIIT…LSWKIRLLDV (176 aa)) form the FAD-binding PCMH-type domain. His-115 carries the post-translational modification Pros-8alpha-FAD histidine. Asn-146, Asn-215, and Asn-439 each carry an N-linked (GlcNAc...) asparagine glycan.

The protein belongs to the oxygen-dependent FAD-linked oxidoreductase family. Requires FAD as cofactor. In terms of tissue distribution, accumulates in cell walls of etiolated hypocotyls.

The protein resides in the secreted. It is found in the cell wall. This Arabidopsis thaliana (Mouse-ear cress) protein is Berberine bridge enzyme-like 27.